A 127-amino-acid chain; its full sequence is MSNRKPYVREMKRTWWKDHPFYRFYMVREATVLPLILFTLFLTVGLGSLVKGPEAWQTWLDFMANPLVIAINLVALAGSLFHAQTFFSMMPQVVPIRLGGKLVDKKIIVLAQWAAVAFISLIVLIVV.

The next 3 membrane-spanning stretches (helical) occupy residues 30-50, 67-87, and 107-127; these read ATVL…GSLV, LVIA…QTFF, and IIVL…LIVV.

This sequence belongs to the FrdC family. As to quaternary structure, part of an enzyme complex containing four subunits: a flavoprotein (FrdA), an iron-sulfur protein (FrdB), and two hydrophobic anchor proteins (FrdC and FrdD).

It localises to the cell inner membrane. In terms of biological role, anchors the catalytic components of the fumarate reductase complex to the cell membrane, binds quinones. In Vibrio cholerae serotype O1 (strain ATCC 39541 / Classical Ogawa 395 / O395), this protein is Fumarate reductase subunit C.